The primary structure comprises 207 residues: 2,3-bisphosphoglycerate-dependent phosphoglycerate mutase (207 aa).

Substrate contacts are provided by residues 10 to 17 (RHGQSEWN), 23 to 24 (TG), Arg62, 89 to 92 (ERDY), Lys100, 116 to 117 (RR), and 160 to 161 (GN). The active-site Tele-phosphohistidine intermediate is the His11. Catalysis depends on Glu89, which acts as the Proton donor/acceptor.

This sequence belongs to the phosphoglycerate mutase family. BPG-dependent PGAM subfamily. In terms of assembly, homodimer.

It carries out the reaction (2R)-2-phosphoglycerate = (2R)-3-phosphoglycerate. Its pathway is carbohydrate degradation; glycolysis; pyruvate from D-glyceraldehyde 3-phosphate: step 3/5. Functionally, catalyzes the interconversion of 2-phosphoglycerate and 3-phosphoglycerate. The protein is 2,3-bisphosphoglycerate-dependent phosphoglycerate mutase of Nitrobacter winogradskyi (strain ATCC 25391 / DSM 10237 / CIP 104748 / NCIMB 11846 / Nb-255).